A 257-amino-acid polypeptide reads, in one-letter code: Metallo-beta-lactamase type 2 (257 aa).

Residues 1–30 (MKKNTLLKVGLCVSLLGTTQFVSTISSVQA) form the signal peptide. Zn(2+) is bound by residues His-116, His-118, Asp-120, His-179, and Cys-198. Residues Lys-201 and Asn-210 each coordinate substrate. His-240 is a binding site for Zn(2+).

This sequence belongs to the metallo-beta-lactamase superfamily. Class-B beta-lactamase family. As to quaternary structure, monomer. Requires Zn(2+) as cofactor.

The protein localises to the periplasm. The enzyme catalyses a beta-lactam + H2O = a substituted beta-amino acid. Functionally, confers resistance to the different beta-lactams antibiotics (penicillin, cephalosporin and carbapenem) via the hydrolysis of the beta-lactam ring. This Bacillus sp. (strain 170) protein is Metallo-beta-lactamase type 2.